We begin with the raw amino-acid sequence, 468 residues long: Argininosuccinate lyase (468 aa).

The protein belongs to the lyase 1 family. Argininosuccinate lyase subfamily.

It localises to the cytoplasm. It catalyses the reaction 2-(N(omega)-L-arginino)succinate = fumarate + L-arginine. It participates in amino-acid biosynthesis; L-arginine biosynthesis; L-arginine from L-ornithine and carbamoyl phosphate: step 3/3. This chain is Argininosuccinate lyase, found in Cutibacterium acnes (strain DSM 16379 / KPA171202) (Propionibacterium acnes).